A 227-amino-acid polypeptide reads, in one-letter code: UPF0173 metal-dependent hydrolase BCB4264_A4722 (227 aa).

It belongs to the UPF0173 family.

This is UPF0173 metal-dependent hydrolase BCB4264_A4722 from Bacillus cereus (strain B4264).